A 313-amino-acid polypeptide reads, in one-letter code: MGNELQHRTVLLDEAVDSLVTRPDGIYVDGTFGRGGHSRAVLARLAPGGRLIAFDKDPRAIETAQRIEDARFSIVHDSFASMRDALAARGVEKVSGVLLDLGVSSPQVDDPARGFSFRADGPLDMRMDPTRGESAAEWLARASVQELTEVIRDYGEERFAFQIAKALVARRAESDRLGPLDTTGELAQIVGHVVKTREKGKDPATRTFQAIRIHVNQELADLQVVLDAALSLLEQGGRLVVISFHSLEDRIVKRFMQAHASAPAVDRRLPIRAVDLPSPPLKIISRQFPSEAEVAANPRARSAVMRIAERVTP.

S-adenosyl-L-methionine is bound by residues 35-37 (GGH), D55, F79, D100, and Q107.

This sequence belongs to the methyltransferase superfamily. RsmH family.

It is found in the cytoplasm. The catalysed reaction is cytidine(1402) in 16S rRNA + S-adenosyl-L-methionine = N(4)-methylcytidine(1402) in 16S rRNA + S-adenosyl-L-homocysteine + H(+). Functionally, specifically methylates the N4 position of cytidine in position 1402 (C1402) of 16S rRNA. This Burkholderia vietnamiensis (strain G4 / LMG 22486) (Burkholderia cepacia (strain R1808)) protein is Ribosomal RNA small subunit methyltransferase H.